The sequence spans 152 residues: Deoxyuridine 5'-triphosphate nucleotidohydrolase (152 aa).

Substrate-binding positions include 70–72, Asn83, 87–89, and Met97; these read RSG and LID.

The protein belongs to the dUTPase family. The cofactor is Mg(2+).

The catalysed reaction is dUTP + H2O = dUMP + diphosphate + H(+). It functions in the pathway pyrimidine metabolism; dUMP biosynthesis; dUMP from dCTP (dUTP route): step 2/2. This enzyme is involved in nucleotide metabolism: it produces dUMP, the immediate precursor of thymidine nucleotides and it decreases the intracellular concentration of dUTP so that uracil cannot be incorporated into DNA. The chain is Deoxyuridine 5'-triphosphate nucleotidohydrolase from Buchnera aphidicola subsp. Baizongia pistaciae (strain Bp).